The chain runs to 162 residues: Photosystem II extrinsic protein V (162 aa).

An N-terminal signal peptide occupies residues 1 to 26; that stretch reads MLKRYMLLAVATVFFAFQVLTSTATA. Heme c contacts are provided by Cys-62, Cys-65, His-66, and His-117.

The protein belongs to the cytochrome c family. PsbV subfamily. As to quaternary structure, PSII is composed of 1 copy each of membrane proteins PsbA, PsbB, PsbC, PsbD, PsbE, PsbF, PsbH, PsbI, PsbJ, PsbK, PsbL, PsbM, PsbT, PsbX, PsbY, PsbZ, Psb30/Ycf12, peripheral proteins PsbO, CyanoQ (PsbQ), PsbU, PsbV and a large number of cofactors. It forms dimeric complexes. The cofactor is heme c.

It is found in the cellular thylakoid membrane. In terms of biological role, one of the extrinsic, lumenal subunits of photosystem II (PSII). PSII is a light-driven water plastoquinone oxidoreductase, using light energy to abstract electrons from H(2)O, generating a proton gradient subsequently used for ATP formation. The extrinsic proteins stabilize the structure of photosystem II oxygen-evolving complex (OEC), the ion environment of oxygen evolution and protect the OEC against heat-induced inactivation. Low-potential cytochrome c that plays a role in the OEC of PSII. This Acaryochloris marina (strain MBIC 11017) protein is Photosystem II extrinsic protein V.